Reading from the N-terminus, the 378-residue chain is Alpha-galactosidase (378 aa).

Positions 1 to 15 (MVKSPGTEDYTRRSL) are cleaved as a signal peptide. 2 disulfide bridges follow: Cys36/Cys68 and Cys116/Cys147. The Nucleophile role is filled by Asp145. 178-182 (EWGEE) serves as a coordination point for substrate. The active-site Proton donor is Asp200.

Belongs to the glycosyl hydrolase 27 family.

The enzyme catalyses Hydrolysis of terminal, non-reducing alpha-D-galactose residues in alpha-D-galactosides, including galactose oligosaccharides, galactomannans and galactolipids.. In terms of biological role, preferentially cleaves alpha-1,3 and alpha-1,4 glycoside linkages. Involved in the hydrolysis of the galactomannan, it splits alpha-linked galactose moieties. It is particularly suitable for the hydrolysis of guar gum to a gum with improved gelling properties. Can cleave terminal alpha-1,3-linked galactose residues responsible for blood group B specificity from the surface of erythrocytes thereby converting these cells serologically to group O. The sequence is that of Alpha-galactosidase from Coffea arabica (Arabian coffee).